A 281-amino-acid polypeptide reads, in one-letter code: CLA biosynthesis isomerase (281 aa).

It belongs to the ADC family.

It localises to the cytoplasm. The enzyme catalyses 10-oxo-(12Z)-octadecenoate = 10-oxo-(11E)-octadecenoate. It participates in lipid metabolism; fatty acid metabolism. In terms of biological role, is involved in a saturation metabolic pathway of polyunsaturated fatty acids, that detoxifies unsaturated fatty acids and generates hydroxy fatty acids, oxo fatty acids, conjugated fatty acids such as conjugated linoleic acids (CLAs), and partially saturated trans-fatty acids as intermediates. CLA-DC catalyzes the migration of the carbon-carbon double bond in 10-oxo-(12Z)-octadecenoate to produce 10-oxo-(11E)-octadecenoate, during linoleate metabolism. As part of the gut microbiome, this enzyme modifies host fatty acid composition and is expected to improve human health by altering lipid metabolism related to the onset of metabolic syndrome. This is CLA biosynthesis isomerase from Lactiplantibacillus plantarum (Lactobacillus plantarum).